Consider the following 107-residue polypeptide: Integration host factor subunit beta (107 aa).

Basic and acidic residues predominate over residues 82-101; that stretch reads PGKELRERVDRRAGEPLKAE. The disordered stretch occupies residues 82–107; the sequence is PGKELRERVDRRAGEPLKAEDPDDDL.

Belongs to the bacterial histone-like protein family. As to quaternary structure, heterodimer of an alpha and a beta chain.

This protein is one of the two subunits of integration host factor, a specific DNA-binding protein that functions in genetic recombination as well as in transcriptional and translational control. This chain is Integration host factor subunit beta, found in Paraburkholderia xenovorans (strain LB400).